Reading from the N-terminus, the 353-residue chain is uncharacterized protein (353 aa).

7 residues coordinate Zn(2+): cysteine 40, histidine 70, cysteine 100, cysteine 103, cysteine 106, cysteine 114, and cysteine 158.

It belongs to the zinc-containing alcohol dehydrogenase family. Requires Zn(2+) as cofactor.

This is an uncharacterized protein from Escherichia coli (strain K12).